The chain runs to 281 residues: Putative glutamine amidotransferase-like protein RP404 (281 aa).

In terms of domain architecture, Glutamine amidotransferase type-1 spans 19-281 (KYTYADFPWY…KALVKASKYI (263 aa)). The region spanning 139 to 174 (RHFSKLTYSKKFECNTEAFATTVYTLPIKLEFENAP) is the RPE1 insert domain.

This chain is Putative glutamine amidotransferase-like protein RP404, found in Rickettsia prowazekii (strain Madrid E).